A 374-amino-acid chain; its full sequence is Tryptophan--tRNA ligase (374 aa).

Positions Pro-81–His-89 match the 'HIGH' region motif. The 'KMSKS' region signature appears at Lys-258–Ser-262.

The protein belongs to the class-I aminoacyl-tRNA synthetase family.

The protein resides in the cytoplasm. The enzyme catalyses tRNA(Trp) + L-tryptophan + ATP = L-tryptophyl-tRNA(Trp) + AMP + diphosphate + H(+). The sequence is that of Tryptophan--tRNA ligase from Pyrobaculum arsenaticum (strain DSM 13514 / JCM 11321 / PZ6).